Here is a 642-residue protein sequence, read N- to C-terminus: Threonine--tRNA ligase (642 aa).

Residues 1–61 (MPAITLPDGS…AADAQVVFVT (61 aa)) form the TGS domain. Residues 243 to 536 (DHRRLGKEMD…LIEQYAGRFP (294 aa)) are catalytic. C336, H387, and H513 together coordinate Zn(2+).

This sequence belongs to the class-II aminoacyl-tRNA synthetase family. As to quaternary structure, homodimer. The cofactor is Zn(2+).

The protein resides in the cytoplasm. It catalyses the reaction tRNA(Thr) + L-threonine + ATP = L-threonyl-tRNA(Thr) + AMP + diphosphate + H(+). Functionally, catalyzes the attachment of threonine to tRNA(Thr) in a two-step reaction: L-threonine is first activated by ATP to form Thr-AMP and then transferred to the acceptor end of tRNA(Thr). Also edits incorrectly charged L-seryl-tRNA(Thr). This Granulibacter bethesdensis (strain ATCC BAA-1260 / CGDNIH1) protein is Threonine--tRNA ligase.